Here is a 128-residue protein sequence, read N- to C-terminus: Large ribosomal subunit protein bL12 (128 aa).

The protein belongs to the bacterial ribosomal protein bL12 family. As to quaternary structure, homodimer. Part of the ribosomal stalk of the 50S ribosomal subunit. Forms a multimeric L10(L12)X complex, where L10 forms an elongated spine to which 2 to 4 L12 dimers bind in a sequential fashion. Binds GTP-bound translation factors.

Functionally, forms part of the ribosomal stalk which helps the ribosome interact with GTP-bound translation factors. Is thus essential for accurate translation. The sequence is that of Large ribosomal subunit protein bL12 from Corynebacterium jeikeium (strain K411).